Reading from the N-terminus, the 256-residue chain is Small ribosomal subunit protein eS1 (256 aa).

A compositionally biased stretch (basic residues) spans 1 to 18 (MAVGKNKRLSKGKKGIKK). Residues 1–20 (MAVGKNKRLSKGKKGIKKRT) are disordered. At A2 the chain carries N-acetylalanine; partial.

Belongs to the eukaryotic ribosomal protein eS1 family. Component of the small ribosomal subunit. Mature ribosomes consist of a small (40S) and a large (60S) subunit. The 40S subunit contains about 33 different proteins and 1 molecule of RNA (18S). The 60S subunit contains about 49 different proteins and 3 molecules of RNA (25S, 5.8S and 5S).

The protein localises to the cytoplasm. In Emericella nidulans (strain FGSC A4 / ATCC 38163 / CBS 112.46 / NRRL 194 / M139) (Aspergillus nidulans), this protein is Small ribosomal subunit protein eS1 (rps1).